The following is a 782-amino-acid chain: MSKNIDDKNEDGKKIKIIKLRKKVVKIVTHNDLSGKNNPSGSTDLHKHNNKVEYSHSRDGRTGGYSQNRDGRTGGYSQNRDGRTGGYSQNRDSLTSQYQGSTKKTYVAKNNTQNKYTTSVSFRRVIKTKVPSIVSSASSTDSENSKELNRKLGEKKKQQQESQKSYKRKKAETESKTIEQKVFEQLQKKKRENLANPIPKSIDIMGSITVSDLARKMNLKSSDLIAKLMALGVMVTINEKIDSDTATILVEEYGSKVNVVSIYDETVIEEEVEDQSKRIEKPPVITIMGHVDHGKTRLLSVLQNIDINQTESGGITQHIGAYTIVYNSREITFLDTPGHEAFTMMRSRGAQVTDIVVLVVSAIDGVMPQTIEAINHAKEANVPIIVAINKIDLPDSNPDKIKHQLSEYDLVPEDWGGDTIFVLISALKNIGISELLDMILLQADMMLLKANPSKRAIGKVLDAKIDLGRGIVCSVIIEDGTLYVGDSFVGGACYGKVKALINDKGVSVKSVGPAKAISVLGFSSMPQAGDPFQVTKTEKEAKLISSKRQDLKKYESSKNVKKVTMLNLYDSIKEGTLKELKIILKADVQGSVEALKNSLEKLTNDEVRVRVVHSSAGVITETDISFASASDAIVIGFHVRPTVKAQILADQEKVEIRKYNVIYDAISDVKSVLEGMLEPDVEQQFIGFAEVRAVINVPKVGVIAGCYVSRGLIKRDAITNVMRDGLQIHSGKISSLKRFKDDVKEVAEQYECGIMIDNYANIKEGDIIEAFEVKKVKKTFKT.

Positions 1 to 14 (MSKNIDDKNEDGKK) are enriched in basic and acidic residues. Disordered stretches follow at residues 1-106 (MSKN…KKTY) and 132-174 (SIVS…AETE). Over residues 15 to 25 (IKIIKLRKKVV) the composition is skewed to basic residues. Polar residues predominate over residues 31 to 43 (NDLSGKNNPSGST). Residues 44–61 (DLHKHNNKVEYSHSRDGR) show a composition bias toward basic and acidic residues. Polar residues-rich tracts occupy residues 86 to 106 (GYSQNRDSLTSQYQGSTKKTY) and 133 to 142 (IVSSASSTDS). The span at 143–159 (ENSKELNRKLGEKKKQQ) shows a compositional bias: basic and acidic residues. The tr-type G domain occupies 280–453 (EKPPVITIMG…DMMLLKANPS (174 aa)). Positions 289–296 (GHVDHGKT) are G1. 289-296 (GHVDHGKT) contributes to the GTP binding site. The tract at residues 314-318 (GITQH) is G2. A G3 region spans residues 335-338 (DTPG). GTP-binding positions include 335–339 (DTPGH) and 389–392 (NKID). The segment at 389–392 (NKID) is G4. The interval 425–427 (SAL) is G5.

Belongs to the TRAFAC class translation factor GTPase superfamily. Classic translation factor GTPase family. IF-2 subfamily.

The protein resides in the cytoplasm. In terms of biological role, one of the essential components for the initiation of protein synthesis. Protects formylmethionyl-tRNA from spontaneous hydrolysis and promotes its binding to the 30S ribosomal subunits. Also involved in the hydrolysis of GTP during the formation of the 70S ribosomal complex. In Borreliella afzelii (strain PKo) (Borrelia afzelii), this protein is Translation initiation factor IF-2.